A 610-amino-acid chain; its full sequence is GPI transamidase component GPI16 (610 aa).

A signal peptide spans 1–19 (MILTLAYFMLGTLLLGVFA). The Lumenal portion of the chain corresponds to 20–551 (EDTVSQIGIN…STPDFSMPYN (532 aa)). A glycan (N-linked (GlcNAc...) asparagine) is linked at Asn-184. The helical transmembrane segment at 552–572 (VIILTSTIMGLIFGMLYNLMV) threads the bilayer. Topologically, residues 573-610 (KRMVTVEEADKITLQSGLKYKLLKLKEKFLGKKKTKTD) are cytoplasmic.

This sequence belongs to the PIGT family. As to quaternary structure, forms a complex with CDC91, GPI17, GPI8 and GAA1. Post-translationally, the disulfide bond between GPI8 and GPI16 is important for normal enzyme activity.

The protein resides in the endoplasmic reticulum membrane. The protein operates within glycolipid biosynthesis; glycosylphosphatidylinositol-anchor biosynthesis. Functionally, component of the GPI transamidase complex. Involved in transfer of GPI to proteins. This is GPI transamidase component GPI16 (GPI16) from Saccharomyces cerevisiae (strain ATCC 204508 / S288c) (Baker's yeast).